The sequence spans 828 residues: Phenylalanine--tRNA ligase beta subunit (828 aa).

In terms of domain architecture, tRNA-binding spans 44-155 (GPVDGPLTVG…GTAEPGADGA (112 aa)). Residues 411–486 (WSPPAIQMPA…RLEGLEVIGS (76 aa)) enclose the B5 domain. Mg(2+) contacts are provided by aspartate 464, aspartate 470, glutamate 473, and glutamate 474. Residues 734–827 (SPFPAVFQDV…AAEAVGAELR (94 aa)) form the FDX-ACB domain.

It belongs to the phenylalanyl-tRNA synthetase beta subunit family. Type 1 subfamily. In terms of assembly, tetramer of two alpha and two beta subunits. The cofactor is Mg(2+).

Its subcellular location is the cytoplasm. The enzyme catalyses tRNA(Phe) + L-phenylalanine + ATP = L-phenylalanyl-tRNA(Phe) + AMP + diphosphate + H(+). The polypeptide is Phenylalanine--tRNA ligase beta subunit (Mycolicibacterium paratuberculosis (strain ATCC BAA-968 / K-10) (Mycobacterium paratuberculosis)).